We begin with the raw amino-acid sequence, 344 residues long: Ferrochelatase (344 aa).

Fe cation is bound by residues His-214 and Glu-295.

It belongs to the ferrochelatase family.

It is found in the cytoplasm. The enzyme catalyses heme b + 2 H(+) = protoporphyrin IX + Fe(2+). It functions in the pathway porphyrin-containing compound metabolism; protoheme biosynthesis; protoheme from protoporphyrin-IX: step 1/1. Functionally, catalyzes the ferrous insertion into protoporphyrin IX. The polypeptide is Ferrochelatase (Agrobacterium fabrum (strain C58 / ATCC 33970) (Agrobacterium tumefaciens (strain C58))).